A 517-amino-acid polypeptide reads, in one-letter code: Serine hydroxymethyltransferase 2, mitochondrial (517 aa).

Residues 1–29 (MALALRRLSSSVKKPISLLSSNGGSLRFM) constitute a mitochondrion transit peptide. L-serine is bound at residue Ser-82. Residues Ser-82, Tyr-102, Glu-104, Tyr-112, 148 to 150 (SGS), and His-177 each bind pemetrexed. L-serine-binding residues include Glu-104 and Tyr-112. Glu-104 is a binding site for methotrexate. Methotrexate is bound at residue 184 to 186 (TDT). 2 residues coordinate pemetrexed: Ser-232 and His-260. 2 residues coordinate L-serine: His-260 and Lys-286. An N6-(pyridoxal phosphate)lysine modification is found at Lys-286. Gly-331 contributes to the pemetrexed binding site. Lys-414 is a methotrexate binding site. Arg-430 lines the L-serine pocket. Arg-430 provides a ligand contact to pemetrexed.

Belongs to the SHMT family. As to quaternary structure, homotetramer. It depends on pyridoxal 5'-phosphate as a cofactor. As to expression, ubiquitous. Mainly expressed in the shoot apical meristem and roots. Also detected in the leaf vasculature, especially in the protoxylem and adjacent cell layers.

The protein resides in the mitochondrion. The enzyme catalyses (6R)-5,10-methylene-5,6,7,8-tetrahydrofolate + glycine + H2O = (6S)-5,6,7,8-tetrahydrofolate + L-serine. It participates in one-carbon metabolism; tetrahydrofolate interconversion. With respect to regulation, inhibited by the antifolate drugs methotrexate and pemetrexed. Its function is as follows. Functions outside the photorespiratory pathway in catalyzing the interconversion of serine and glycine with the conversion of tetrahydrofolate (THF) into 5,10-methylene-THF. In Arabidopsis thaliana (Mouse-ear cress), this protein is Serine hydroxymethyltransferase 2, mitochondrial.